Reading from the N-terminus, the 452-residue chain is DNA primase DnaG (452 aa).

The 77-residue stretch at 172–248 (DTVIIVEGRA…DIDYIARAPP (77 aa)) folds into the Toprim domain. Mg(2+)-binding residues include Glu-178, Asp-222, and Asp-224. The segment at 289–320 (KKQIEQAQVQPSAAPTSPQPQPESTQPTQPIQ) is disordered. Residues 294-320 (QAQVQPSAAPTSPQPQPESTQPTQPIQ) show a composition bias toward low complexity.

The protein belongs to the archaeal DnaG primase family. Forms a ternary complex with MCM helicase and DNA. Component of the archaeal exosome complex. Mg(2+) is required as a cofactor.

It carries out the reaction ssDNA + n NTP = ssDNA/pppN(pN)n-1 hybrid + (n-1) diphosphate.. RNA polymerase that catalyzes the synthesis of short RNA molecules used as primers for DNA polymerase during DNA replication. Also part of the exosome, which is a complex involved in RNA degradation. Acts as a poly(A)-binding protein that enhances the interaction between heteromeric, adenine-rich transcripts and the exosome. The sequence is that of DNA primase DnaG from Caldivirga maquilingensis (strain ATCC 700844 / DSM 13496 / JCM 10307 / IC-167).